We begin with the raw amino-acid sequence, 144 residues long: Large ribosomal subunit protein uL15 (144 aa).

Residues 1–58 (MRLNTLSPAAGSKPSKKRVGRGIGSGLGKTGGRGHKGQKSRSGGSVRPGFEGGQMPLK) are disordered. Over residues 21–31 (RGIGSGLGKTG) the composition is skewed to gly residues.

It belongs to the universal ribosomal protein uL15 family. In terms of assembly, part of the 50S ribosomal subunit.

Functionally, binds to the 23S rRNA. This chain is Large ribosomal subunit protein uL15, found in Vibrio atlanticus (strain LGP32) (Vibrio splendidus (strain Mel32)).